The chain runs to 363 residues: uncharacterized protein (363 aa).

29–36 is a binding site for ATP; sequence GSINSGKT.

The protein belongs to the archaeal ATPase family.

This is an uncharacterized protein from Methanocaldococcus jannaschii (strain ATCC 43067 / DSM 2661 / JAL-1 / JCM 10045 / NBRC 100440) (Methanococcus jannaschii).